We begin with the raw amino-acid sequence, 226 residues long: Urease accessory protein UreE (226 aa).

Positions 192–226 (PHGSGLHIHSIHSHGDGHSHDHDHSHGDHDSDHKH) are disordered. A compositionally biased stretch (basic and acidic residues) spans 204 to 226 (SHGDGHSHDHDHSHGDHDSDHKH).

The protein belongs to the UreE family.

It localises to the cytoplasm. Its function is as follows. Involved in urease metallocenter assembly. Binds nickel. Probably functions as a nickel donor during metallocenter assembly. This Yersinia intermedia protein is Urease accessory protein UreE.